The following is a 142-amino-acid chain: 3-hydroxyacyl-[acyl-carrier-protein] dehydratase FabZ (142 aa).

His-46 is a catalytic residue.

This sequence belongs to the thioester dehydratase family. FabZ subfamily.

It is found in the cytoplasm. The enzyme catalyses a (3R)-hydroxyacyl-[ACP] = a (2E)-enoyl-[ACP] + H2O. In terms of biological role, involved in unsaturated fatty acids biosynthesis. Catalyzes the dehydration of short chain beta-hydroxyacyl-ACPs and long chain saturated and unsaturated beta-hydroxyacyl-ACPs. In Thermus thermophilus (strain ATCC BAA-163 / DSM 7039 / HB27), this protein is 3-hydroxyacyl-[acyl-carrier-protein] dehydratase FabZ.